The primary structure comprises 717 residues: ATP-dependent RNA helicase homolog DQX1 (717 aa).

The 169-residue stretch at 57 to 225 (QLESNPTGVV…WGNPPIVHIP (169 aa)) folds into the Helicase ATP-binding domain. 70–77 (GEPGSGKS) contributes to the ATP binding site. A DEAQ box motif is present at residues 170-173 (DEAQ). Positions 248 to 447 (ACQAVLELCR…ALMQALEDLD (200 aa)) constitute a Helicase C-terminal domain. The interval 694–717 (GMADSTAGSKSSSAQEFRDPCVLQ) is disordered. The segment covering 699–708 (TAGSKSSSAQ) has biased composition (polar residues).

Its subcellular location is the nucleus. Functionally, might be involved in RNA metabolism; it is missing helicase motif III and may not have helicase activity. The chain is ATP-dependent RNA helicase homolog DQX1 (DQX1) from Homo sapiens (Human).